A 377-amino-acid chain; its full sequence is N5-carboxyaminoimidazole ribonucleotide synthase (377 aa).

Residues arginine 93, lysine 133, 138 to 144, 175 to 178, glutamate 183, histidine 206, and 257 to 258 contribute to the ATP site; these read GYDGKGQ, EEFV, and NE. An ATP-grasp domain is found at 97–287; it reads KALLDHAGVR…QFENHLRAVC (191 aa).

The protein belongs to the PurK/PurT family. Homodimer.

The catalysed reaction is 5-amino-1-(5-phospho-beta-D-ribosyl)imidazole + hydrogencarbonate + ATP = 5-carboxyamino-1-(5-phospho-D-ribosyl)imidazole + ADP + phosphate + 2 H(+). The protein operates within purine metabolism; IMP biosynthesis via de novo pathway; 5-amino-1-(5-phospho-D-ribosyl)imidazole-4-carboxylate from 5-amino-1-(5-phospho-D-ribosyl)imidazole (N5-CAIR route): step 1/2. Catalyzes the ATP-dependent conversion of 5-aminoimidazole ribonucleotide (AIR) and HCO(3)(-) to N5-carboxyaminoimidazole ribonucleotide (N5-CAIR). The protein is N5-carboxyaminoimidazole ribonucleotide synthase of Vibrio vulnificus (strain CMCP6).